A 625-amino-acid chain; its full sequence is Glyco-Gag protein (625 aa).

Residues 1–66 (LGDVSEASGA…SVFRRNRAAR (66 aa)) lie on the Cytoplasmic side of the membrane. A helical membrane pass occupies residues 67 to 86 (LVCLSIVLSFVCSLLFWTAS). Residues 87–625 (KNMGQTVTTP…PQTSLLTLDD (539 aa)) are Extracellular-facing. A glycan (N-linked (GlcNAc...) asparagine; by host) is linked at Asn-113. A disordered region spans residues 195-305 (PSPTAPILPS…STTSRAFPLR (111 aa)). Asn-479 is a glycosylation site (N-linked (GlcNAc...) asparagine; by host). Composition is skewed to basic and acidic residues over residues 522 to 553 (ETPE…EKER) and 573 to 606 (RQDR…DCPK). The segment at 522-625 (ETPEEREERV…PQTSLLTLDD (104 aa)) is disordered.

In terms of processing, glycosylated by host. Cleaved by host near the middle of the molecule, releasing the c-terminal half containing capsid and nucleoprotein domains op GAG.

Its subcellular location is the host cell membrane. In terms of biological role, plays a role in viral particle release. Presumably acts by facilitating the fission of the virion bud at the cell surface. May prevent the antiviral activity of murine APOBEC3. In AKV murine leukemia virus (AKR (endogenous) murine leukemia virus), this protein is Glyco-Gag protein.